The sequence spans 345 residues: Putative membrane protein ORF59 (345 aa).

A run of 4 helical transmembrane segments spans residues 46 to 63, 101 to 118, 147 to 165, and 265 to 286; these read LVFA…MMLI, IVFV…LVFL, IFGI…FSIL, and VVPV…WMVI.

It is found in the membrane. This Ictalurid herpesvirus 1 (strain Auburn) (IcHV-1) protein is Putative membrane protein ORF59 (ORF59).